The sequence spans 263 residues: 2-dehydro-3-deoxyphosphooctonate aldolase (263 aa).

The protein belongs to the KdsA family.

The protein resides in the cytoplasm. The enzyme catalyses D-arabinose 5-phosphate + phosphoenolpyruvate + H2O = 3-deoxy-alpha-D-manno-2-octulosonate-8-phosphate + phosphate. It participates in carbohydrate biosynthesis; 3-deoxy-D-manno-octulosonate biosynthesis; 3-deoxy-D-manno-octulosonate from D-ribulose 5-phosphate: step 2/3. It functions in the pathway bacterial outer membrane biogenesis; lipopolysaccharide biosynthesis. In Wolinella succinogenes (strain ATCC 29543 / DSM 1740 / CCUG 13145 / JCM 31913 / LMG 7466 / NCTC 11488 / FDC 602W) (Vibrio succinogenes), this protein is 2-dehydro-3-deoxyphosphooctonate aldolase.